A 386-amino-acid chain; its full sequence is Cytochrome b (386 aa).

4 consecutive transmembrane segments (helical) span residues 32 to 52 (FGSL…TLAM), 76 to 98 (WLIR…LHVG), 113 to 133 (TWII…LGYV), and 179 to 199 (FFAL…MHLI). H82 and H96 together coordinate heme b. 2 residues coordinate heme b: H183 and H197. H202 is a binding site for a ubiquinone. Helical transmembrane passes span 226–246 (YIFK…LFVF), 290–310 (LLGV…PITD), 322–342 (LSKV…QLGA), and 349–369 (FIEF…VIMP).

Belongs to the cytochrome b family. As to quaternary structure, fungal cytochrome b-c1 complex contains 10 subunits; 3 respiratory subunits, 2 core proteins and 5 low-molecular weight proteins. Cytochrome b-c1 complex is a homodimer. It depends on heme b as a cofactor.

The protein localises to the mitochondrion inner membrane. Component of the ubiquinol-cytochrome c reductase complex (complex III or cytochrome b-c1 complex) that is part of the mitochondrial respiratory chain. The b-c1 complex mediates electron transfer from ubiquinol to cytochrome c. Contributes to the generation of a proton gradient across the mitochondrial membrane that is then used for ATP synthesis. The polypeptide is Cytochrome b (cob) (Talaromyces marneffei (Penicillium marneffei)).